The following is a 1043-amino-acid chain: tRNA wybutosine-synthesizing protein 2/3/4 (1043 aa).

Residues 1–233 (MEFDRRKAAA…PVLQNGAKHG (233 aa)) form a tRNA wybutosine-synthesizing protein 3 homolog region. Residues 53–75 (RVSVLAQPPPPQQADPGGAKTKK) are disordered. 4 Kelch repeats span residues 360-410 (DIYV…AVDR), 412-460 (VYVF…SYGS), 461-510 (KLFL…IYKD), and 512-559 (LGIL…VIID). The tract at residues 700–1041 (QPDDSCVFEE…RHLVVDVKCR (342 aa)) is tRNA wybutosine-synthesizing protein 2 homolog. Residues lysine 874 and 942–943 (DN) contribute to the S-adenosyl-L-methionine site.

It in the C-terminal section; belongs to the class I-like SAM-binding methyltransferase superfamily. TRM5/TYW2 family. In the N-terminal section; belongs to the TYW3 family.

The enzyme catalyses 4-demethyl-7-[(3S)-3-amino-3-carboxypropyl]wyosine(37) in tRNA(Phe) + S-adenosyl-L-methionine = 7-[(3S)-3-amino-3-carboxypropyl]wyosine(37) in tRNA(Phe) + S-adenosyl-L-homocysteine + H(+). It carries out the reaction 4-demethylwyosine(37) in tRNA(Phe) + S-adenosyl-L-methionine = 4-demethyl-7-[(3S)-3-amino-3-carboxypropyl]wyosine(37) in tRNA(Phe) + S-methyl-5'-thioadenosine + H(+). The protein operates within tRNA modification; wybutosine-tRNA(Phe) biosynthesis. Functionally, S-adenosyl-L-methionine-dependent transferase that acts as a component of the wybutosine biosynthesis pathway. Wybutosine is a hyper modified guanosine with a tricyclic base found at the 3'-position adjacent to the anticodon of eukaryotic phenylalanine tRNA. This Oryza sativa subsp. japonica (Rice) protein is tRNA wybutosine-synthesizing protein 2/3/4.